A 463-amino-acid polypeptide reads, in one-letter code: Asparagine--tRNA ligase (463 aa).

The protein belongs to the class-II aminoacyl-tRNA synthetase family. In terms of assembly, homodimer.

Its subcellular location is the cytoplasm. It catalyses the reaction tRNA(Asn) + L-asparagine + ATP = L-asparaginyl-tRNA(Asn) + AMP + diphosphate + H(+). In Bacillus cereus (strain ATCC 10987 / NRS 248), this protein is Asparagine--tRNA ligase.